The sequence spans 3198 residues: Helicase domino (3198 aa).

Positions 1 to 12 (MNEGNSAGGGHE) are enriched in gly residues. 3 disordered regions span residues 1–27 (MNEG…RVTP), 93–112 (LPQQ…APAH), and 119–148 (SSTI…AASI). Residues 134 to 143 (QRLDDNEDRT) show a composition bias toward basic and acidic residues. Residues 187–212 (KKRILQQKLQILRNLKERHLENVSEY) are a coiled coil. 2 disordered regions span residues 256-350 (TSAA…SATS) and 391-474 (GGTP…TPNS). Composition is skewed to polar residues over residues 264-281 (QNQK…SSLV) and 297-329 (NISN…TESN). Residues 330-350 (SSTTVPGTATSGAATSTSATS) show a composition bias toward low complexity. Polar residues predominate over residues 391-404 (GGTPLLPCNTSAGS). Low complexity predominate over residues 452–464 (PGTPTSGSLLSPA). The 73-residue stretch at 507-579 (LPKLQEPSRP…QELQLKRVAS (73 aa)) folds into the HSA domain. Positions 635 to 848 (NKSVADTPSL…DMEEQDEQED (214 aa)) are disordered. Residues 638–650 (VADTPSLNSSRLT) show a composition bias toward polar residues. Residues 652–664 (PKRESDDDFRPES) are compositionally biased toward basic and acidic residues. Ser-656, Ser-664, and Ser-666 each carry phosphoserine. A coiled-coil region spans residues 666–696 (SEDDEETIAKAEEDAADVKEEVTALAKESEM). Composition is skewed to basic and acidic residues over residues 672-695 (TIAK…KESE) and 711-721 (ENRDKLMKEEQ). A Phosphothreonine modification is found at Thr-729. Residues Ser-733, Ser-736, and Ser-744 each carry the phosphoserine modification. Positions 741-784 (KEASDDDENTISKQEEAEQEIDHKKEIDELEADNDLSVEQLLAK) form a coiled coil. Over residues 753 to 767 (KQEEAEQEIDHKKEI) the composition is skewed to basic and acidic residues. Positions 805–831 (LDSDDDSTAVDSTEESEDAATEDEEDL) are enriched in acidic residues. Residue Thr-838 is modified to Phosphothreonine. A Helicase ATP-binding domain is found at 926–1091 (VTMNERKLNG…WSLMHFLMPY (166 aa)). 939–946 (DEMGLGKT) is a binding site for ATP. The interval 1471–1492 (VQKQSIANGKTEPEEETEAEDP) is disordered. Residues 1662 to 1812 (TMDRLLRQLK…DMAIEGGNFT (151 aa)) form the Helicase C-terminal domain. The segment at 1828-1856 (EQSEQDESSQEKSENKDRIVATTTLSDTP) is disordered. The span at 1836 to 1846 (SQEKSENKDRI) shows a compositional bias: basic and acidic residues. A coiled-coil region spans residues 1951–1996 (AAWTAEQLRAAEAELEAQKREWEANRLAAMHKEEELLKQETEAEEM). Positions 2061–2100 (KEHKRSRTDAGYDGSRRPNKMRREDNYVPPRSLFDRPTPQ) are disordered. Positions 2067–2086 (RTDAGYDGSRRPNKMRREDN) are enriched in basic and acidic residues. One can recognise a Myb-like domain in the interval 2136-2205 (TEPEAMAEWC…QCRWRYETHI (70 aa)). The tract at residues 2318–2362 (IREKQRGQQMSQPPVGVGVVQQMQQQSQQQQQPAPPPLPQQQQPQ) is disordered. The span at 2325 to 2349 (QQMSQPPVGVGVVQQMQQQSQQQQQ) shows a compositional bias: low complexity.

This sequence belongs to the SNF2/RAD54 helicase family. SWR1 subfamily. As to quaternary structure, component of the Tip60 chromatin-remodeling complex which contains Domino, Tip60, Tra1, Brd8, E(Pc), DMAP1, Pontin, Reptin, Ing3, Act87E, BAP55, Mrg15, MrgBP, Gas41 and YL-1. Isoform B is present at high levels in ovary, in follicle cells, nurse cells and oocyte. Isoform B is also present in germline and somatic stem cells from the germarium. Isoform A is undetectable in adult ovary (at protein level).

Its subcellular location is the nucleus. Mediates the ATP-dependent exchange of unmodified histone H2AV for its phosphorylated and acetylated form H2AVK5acS138ph, leading to transcriptional regulation of selected genes by chromatin remodeling. Involved in Notch signaling. Represses E2F target genes. Required for somatic stem cell self-renewal but not for germline stem cell self-renewal. Involved in oogenesis. In Drosophila melanogaster (Fruit fly), this protein is Helicase domino (dom).